Reading from the N-terminus, the 714-residue chain is Glutamine-dependent NAD(+) synthetase (714 aa).

The CN hydrolase domain maps to 5–275; it reads ITLATCNLNQ…VEVVTATVDL (271 aa). Glutamate 45 serves as the catalytic Proton acceptor; for glutaminase activity. Lysine 114 functions as the For glutaminase activity in the catalytic mechanism. The active-site Nucleophile; for glutaminase activity is the cysteine 175. The interval 329-714 is ligase; the sequence is YHSPEEEIAL…GSTLDIMSID (386 aa). 359–366 provides a ligand contact to ATP; the sequence is PLSGGIDS. The active site involves serine 361.

In the C-terminal section; belongs to the NAD synthetase family.

The catalysed reaction is deamido-NAD(+) + L-glutamine + ATP + H2O = L-glutamate + AMP + diphosphate + NAD(+) + H(+). Its pathway is cofactor biosynthesis; NAD(+) biosynthesis; NAD(+) from deamido-NAD(+) (L-Gln route): step 1/1. This Saccharomyces cerevisiae (strain ATCC 204508 / S288c) (Baker's yeast) protein is Glutamine-dependent NAD(+) synthetase (QNS1).